A 259-amino-acid polypeptide reads, in one-letter code: Eukaryotic translation initiation factor 3 subunit J (259 aa).

The sufficient for interaction with EIF3B stretch occupies residues 1-70 (MAAAAAAAAG…KEEAEVKPEV (70 aa)). The segment at 1 to 111 (MAAAAAAAAG…EPEESKVLTP (111 aa)) is disordered. Phosphoserine occurs at positions 12, 14, and 21. Acidic residues predominate over residues 41 to 62 (EGEDEDEDVKDNWDDDDDENKE). Over residues 63 to 107 (EAEVKPEVKISEKKKIAEKIKEKERQQKKRQEEIKKRLEEPEESK) the composition is skewed to basic and acidic residues. A coiled-coil region spans residues 71 to 136 (KISEKKKIAE…ESDLELAKET (66 aa)). Lys-107 participates in a covalent cross-link: Glycyl lysine isopeptide (Lys-Gly) (interchain with G-Cter in SUMO2). Phosphothreonine is present on Thr-110. Ser-128 is subject to Phosphoserine. Residues 218–247 (SKAKKKKKGVVPGGGLKATMKDDLADYGGY) form a disordered region. The segment at 244 to 259 (YGGYDGGYVQDYEDFM) is promotes stable association with the 40S ribosome. The residue at position 255 (Tyr-255) is a Phosphotyrosine.

It belongs to the eIF-3 subunit J family. As to quaternary structure, component of the eukaryotic translation initiation factor 3 (eIF-3) complex, which is composed of 13 subunits: EIF3A, EIF3B, EIF3C, EIF3D, EIF3E, EIF3F, EIF3G, EIF3H, EIF3I, EIF3J, EIF3K, EIF3L and EIF3M. The eIF-3 complex appears to include 3 stable modules: module A is composed of EIF3A, EIF3B, EIF3G and EIF3I; module B is composed of EIF3F, EIF3H, and EIF3M; and module C is composed of EIF3C, EIF3D, EIF3E, EIF3K and EIF3L. EIF3C of module C binds EIF3B of module A and EIF3H of module B, thereby linking the three modules. EIF3J is a labile subunit that binds to the eIF-3 complex via EIF3B. The eIF-3 complex interacts with RPS6KB1 under conditions of nutrient depletion. Mitogenic stimulation leads to binding and activation of a complex composed of MTOR and RPTOR, leading to phosphorylation and release of RPS6KB1 and binding of EIF4B to eIF-3. Post-translationally, phosphorylated. Phosphorylation is enhanced upon serum stimulation.

The protein localises to the cytoplasm. Component of the eukaryotic translation initiation factor 3 (eIF-3) complex, which is required for several steps in the initiation of protein synthesis. The eIF-3 complex associates with the 40S ribosome and facilitates the recruitment of eIF-1, eIF-1A, eIF-2:GTP:methionyl-tRNAi and eIF-5 to form the 43S pre-initiation complex (43S PIC). The eIF-3 complex stimulates mRNA recruitment to the 43S PIC and scanning of the mRNA for AUG recognition. The eIF-3 complex is also required for disassembly and recycling of post-termination ribosomal complexes and subsequently prevents premature joining of the 40S and 60S ribosomal subunits prior to initiation. The eIF-3 complex specifically targets and initiates translation of a subset of mRNAs involved in cell proliferation, including cell cycling, differentiation and apoptosis, and uses different modes of RNA stem-loop binding to exert either translational activation or repression. This subunit binds directly within the mRNA entry channel of the 40S ribosome to the aminoacyl (A) site. It may regulate the interaction between the 43S PIC and mRNA. This Rattus norvegicus (Rat) protein is Eukaryotic translation initiation factor 3 subunit J (Eif3j).